The primary structure comprises 269 residues: L-cystine-binding protein TcyJ (269 aa).

An N-terminal signal peptide occupies residues 1–20 (MNKRKGLVLLLSVFALLGGG). A lipid anchor (N-palmitoyl cysteine) is attached at C21. C21 carries the S-diacylglycerol cysteine lipid modification.

The protein belongs to the bacterial solute-binding protein 3 family. In terms of assembly, the complex is composed of two ATP-binding proteins (TcyN), two transmembrane proteins (TcyL and TcyM) and two solute-binding proteins (TcyJ and TcyK).

It is found in the cell membrane. Functionally, part of the ABC transporter complex TcyJKLMN involved in L-cystine import. Is also involved in cystathionine, djenkolate, and S-methylcysteine transport. This is L-cystine-binding protein TcyJ (tcyJ) from Bacillus subtilis (strain 168).